Here is a 446-residue protein sequence, read N- to C-terminus: Tubulin beta-1 chain (446 aa).

GTP is bound by residues Gln-11, Glu-69, Ser-138, Gly-142, Thr-143, Gly-144, Asn-204, and Asn-226. Glu-69 lines the Mg(2+) pocket.

It belongs to the tubulin family. In terms of assembly, dimer of alpha and beta chains. A typical microtubule is a hollow water-filled tube with an outer diameter of 25 nm and an inner diameter of 15 nM. Alpha-beta heterodimers associate head-to-tail to form protofilaments running lengthwise along the microtubule wall with the beta-tubulin subunit facing the microtubule plus end conferring a structural polarity. Microtubules usually have 13 protofilaments but different protofilament numbers can be found in some organisms and specialized cells. Mg(2+) serves as cofactor.

Its subcellular location is the cytoplasm. The protein localises to the cytoskeleton. In terms of biological role, tubulin is the major constituent of microtubules, a cylinder consisting of laterally associated linear protofilaments composed of alpha- and beta-tubulin heterodimers. Microtubules grow by the addition of GTP-tubulin dimers to the microtubule end, where a stabilizing cap forms. Below the cap, tubulin dimers are in GDP-bound state, owing to GTPase activity of alpha-tubulin. This is Tubulin beta-1 chain (TUBB1) from Suillus bovinus (Jersey cow bolete).